The following is a 475-amino-acid chain: Putative response regulator NtrX-like (475 aa).

A Response regulatory domain is found at 5–121 (DVLIVDDEES…KLVILLKRAC (117 aa)). Asp54 bears the 4-aspartylphosphate mark. One can recognise a Sigma-54 factor interaction domain in the interval 143–369 (LVGGCSVTLK…LRNVVEWTLI (227 aa)). Residues 171-178 (GKVGSGKE) and 232-241 (ANNGTLYIDE) each bind ATP.

Member of the two-component regulatory system RF_0895/RF_0427. In Rickettsia felis (strain ATCC VR-1525 / URRWXCal2) (Rickettsia azadi), this protein is Putative response regulator NtrX-like.